The following is a 919-amino-acid chain: MFS-type transporter clz9 (919 aa).

The span at 1–11 shows a compositional bias: polar residues; it reads MAASTKPTTKL. The interval 1–33 is disordered; the sequence is MAASTKPTTKLSTEEDDVSRRDSESSADFMKSN. A helical membrane pass occupies residues 69–89; sequence VVASFAAAISPFSTSTYYPVV. N104 carries N-linked (GlcNAc...) asparagine glycosylation. 3 helical membrane passes run 132–152, 192–212, and 222–242; these read PMFLVCFVTYFVANVGLALQN, LIYATLGSTLGPFIGPVIGGL, and VFWFLLCMGTVFALLIFIFFG. N260 carries N-linked (GlcNAc...) asparagine glycosylation. Helical transmembrane passes span 303–323, 333–353, 393–413, and 418–438; these read FILSVSGGLLYAGYSSVTSVL, YDAVQVGLCYLPVGFGSLLAY, LGFVFPMILVCSGLLVAYGWQ, and APLAPILVTMFLIAIILTGVM. N-linked (GlcNAc...) asparagine glycosylation occurs at N461. Residues 465–485 form a helical membrane-spanning segment; that stretch reads LLLGAGAVAVVGPLNKSAGIG. In terms of domain architecture, DDE-1 spans 641–809; that stretch reads REWVTLIQGI…FTSANICSSF (169 aa). Positions 840–897 are disordered; sequence EAPWEAKTPSNRKKKQIQKRGTLTKGEGEDTLAQKEADQQIEREQRQGGEQSGRSRQA. The segment covering 865–886 has biased composition (basic and acidic residues); that stretch reads GEGEDTLAQKEADQQIEREQRQ. The span at 887-896 shows a compositional bias: low complexity; it reads GGEQSGRSRQ. The N-linked (GlcNAc...) asparagine glycan is linked to N915.

Belongs to the major facilitator superfamily. CAR1 family.

Its subcellular location is the membrane. In terms of biological role, MFS-type transporter; part of the gene cluster that mediates the biosynthesis of squalestatin S1 (SQS1, also known as zaragozic acid A), a heavily oxidized fungal polyketide that offers potent cholesterol lowering activity by targeting squalene synthase (SS). In Cochliobolus lunatus (Filamentous fungus), this protein is MFS-type transporter clz9.